Here is a 539-residue protein sequence, read N- to C-terminus: Cytochrome c oxidase subunit 1 homolog (539 aa).

Transmembrane regions (helical) follow at residues 28 to 48 (LFAAHMWVLFFTLVVSTLLLL) and 75 to 95 (GVMATVFWGVVGFLVGVVVAL). Residue histidine 117 participates in heme b binding. Transmembrane regions (helical) follow at residues 118–138 (TSAVIFAFGGNALIATSFYVV), 154–174 (FVFWGYNLFIIMAATGYLLGI), 187–207 (VDLWLTIVWVAYLATFLGTIL), 214–234 (ISVANWFYLSFIVTIAMLHIV), 265–285 (GHNAVGFFLTAGFLGMMYYFI), 298–318 (LSIIHFWALIFMYIWAGPHHL), 330–350 (LGMVFSIMLWMPSWGGMINGL), 368–388 (MMVMAVAFYGMATFEGPMMSI), 402–422 (IGHVHSGALGWNGMITFGAIY), 443–463 (HFWLATLGIVVYAAVMWVAGI), and 498–518 (LGGLMFLSGALIMAYNVTMTI). Positions 266, 316, and 317 each coordinate Cu cation. 2 residues coordinate heme b: histidine 404 and histidine 406.

This sequence belongs to the heme-copper respiratory oxidase family. The cofactor is Cu(2+). Heme b serves as cofactor.

Its subcellular location is the cell membrane. The enzyme catalyses 4 Fe(II)-[cytochrome c] + O2 + 8 H(+)(in) = 4 Fe(III)-[cytochrome c] + 2 H2O + 4 H(+)(out). Its pathway is energy metabolism; oxidative phosphorylation. Functionally, cytochrome c oxidase is the component of the respiratory chain that catalyzes the reduction of oxygen to water. Subunits 1-3 form the functional core of the enzyme complex. Co I is the catalytic subunit of the enzyme. Electrons originating in cytochrome c or a quinol are transferred to the bimetallic center formed by a high-spin heme and copper B. This Agrobacterium tumefaciens (strain T37) protein is Cytochrome c oxidase subunit 1 homolog (fixN).